Reading from the N-terminus, the 358-residue chain is Protein SGT1 homolog B (358 aa).

TPR repeat units follow at residues 2–35, 37–69, and 70–103; these read AKEL…DPNC, AFFA…EPTL, and AKAY…APNE. The region spanning 157 to 246 is the CS domain; the sequence is KPMFRHEFYQ…AEIITWASLE (90 aa). The disordered stretch occupies residues 255–275; it reads PKPNVSSALSQRPVYPSSKPA. The region spanning 268-358 is the SGS domain; it reads VYPSSKPAKD…DGMELKKWEY (91 aa).

The protein belongs to the SGT1 family. Interacts with RAR1 and HSP90-2. Interacts (via SGS domain) with HSC70-1 and HSC70-3.

The protein localises to the cytoplasm. It is found in the nucleus. Its function is as follows. Involved in plant innate immunity. Essential for race-specific resistance conferred by multiple R genes, including RPP7, recognizing different oomycete pathogen isolates like avirulent Hyaloperonospora arabidopsidis (downy mildew). Contributes additively with RAR1 to RPP5-dependent resistance. Not required for RPM1, RPS2, RPS4 and RPS5-mediated resistance. Functions as a negative regulator of RPS5 accumulation by assisting its degradation. May be involved in heat shock response by associating with HSC70-1 chaperone. Required for the SCF(TIR1)-mediated degradation of Aux/IAA proteins, but maybe not for SCF(TIR1) assembly or binding to its Aux/IAA substrates. Probably required for SCF-mediated ubiquitination, by coupling HSP90 to SCF complex for ubiquitination of HSP90 client proteins. Required for the coronatine/jasmonic acid-mediated signal transduction pathway. This is Protein SGT1 homolog B from Arabidopsis thaliana (Mouse-ear cress).